The following is a 310-amino-acid chain: ATP-dependent protease (310 aa).

An Integrase catalytic domain is found at 24–186; that stretch reads RLNQCFFKFK…TPNQKEENYF (163 aa).

This is ATP-dependent protease from Lactococcus lactis subsp. lactis (Streptococcus lactis).